We begin with the raw amino-acid sequence, 260 residues long: Ras-related protein Rab-26 (260 aa).

The segment at 1 to 56 (MSRKKTPKSKGGSEPATSTLPAAAAATNGPRLAHPRTVRPGPEAPPNGPPQSIRPS) is disordered. 9 residues coordinate GTP: S76, G77, V78, G79, K80, T81, C82, S99, and T100. T81 is a binding site for Mg(2+). 2 consecutive short sequence motifs (switch) follow at residues 90-105 (GAFL…GIDF) and 123-140 (DTAG…YYRD). 2 residues coordinate Mg(2+): T100 and D123. GTP-binding residues include G126, N181, K182, D184, A212, and R213. 2 S-geranylgeranyl cysteine lipidation sites follow: C257 and C258.

This sequence belongs to the small GTPase superfamily. Rab family. Interacts with ADRA2B. Interacts with RIMS1. Mg(2+) serves as cofactor. In terms of tissue distribution, detected in zymogenic cells in the stomach.

The protein resides in the cytoplasmic vesicle. Its subcellular location is the secretory vesicle membrane. It is found in the golgi apparatus membrane. It catalyses the reaction GTP + H2O = GDP + phosphate + H(+). Its activity is regulated as follows. Regulated by guanine nucleotide exchange factors (GEFs) which promote the exchange of bound GDP for free GTP. Regulated by GTPase activating proteins (GAPs) which increase the GTP hydrolysis activity. Inhibited by GDP dissociation inhibitors (GDIs). The small GTPases Rab are key regulators of intracellular membrane trafficking, from the formation of transport vesicles to their fusion with membranes. Rabs cycle between an inactive GDP-bound form and an active GTP-bound form that is able to recruit to membranes different set of downstream effectors directly responsible for vesicle formation, movement, tethering and fusion. RAB26 mediates transport of ADRA2A and ADRA2B from the Golgi to the cell membrane. Plays a role in the maturation of zymogenic granules and in pepsinogen secretion in the stomach. Plays a role in the secretion of amylase from acinar granules in the parotid gland. This is Ras-related protein Rab-26 from Mus musculus (Mouse).